The following is a 453-amino-acid chain: Plasmepsin II (453 aa).

Over 1–37 (MDITVREHDFKHGFIKSNSTFDGLNIDNSKNKKKIQK) the chain is Cytoplasmic. The propeptide occupies 1–124 (MDITVREHDF…SGLTKTNYLG (124 aa)). A helical; Signal-anchor for type II membrane protein membrane pass occupies residues 38-58 (GFQILYVLLFCSVMCGLFYYV). At 59 to 453 (YENVWLQRDN…VGIALAKKNL (395 aa)) the chain is on the lumenal side. Residues 140 to 447 (FYGDAEVGDN…DYDNHSVGIA (308 aa)) form the Peptidase A1 domain. D158 is a catalytic residue. A disulfide bridge connects residues C171 and C176. Residue D338 is part of the active site. C373 and C409 are disulfide-bonded.

It belongs to the peptidase A1 family. Component of the hemozoin formation complex (HFC) composed of falcipains FP2A and/or FP2B, plasmepsins PMII, PMIII/HAP and PMIV, heme detoxifying protein HDP and falcilysin FLN. The HFC complex is involved in hemoglobin degradation and detoxification of heme in the food vacuole during the asexual blood stage. In terms of processing, not N-glycosylated. Post-translationally, proteolytically cleaved into the soluble active mature form in the digestive vacuole by cysteine protease falcipains; the process begins at the early ring stage. Proteolysis requires an acidic environment. In absence of falcipains, autoprocessing may serve as an alternate activation system.

It is found in the membrane. Its subcellular location is the vacuole lumen. It localises to the vacuole membrane. It carries out the reaction Hydrolysis of the bonds linking certain hydrophobic residues in hemoglobin or globin. Also cleaves small molecules substrates such as Ala-Leu-Glu-Arg-Thr-Phe-|-Phe(NO2)-Ser-Phe-Pro-Thr.. Its activity is regulated as follows. Inhibited by pepstatin A. Functionally, during the asexual blood stage, participates in initial cleavage of native host hemoglobin (Hb) resulting in Hb denaturation. May cleave preferentially denatured hemoglobin that has been cleaved by PMI. Digestion of host Hb is an essential step which provides the parasite with amino acids for protein synthesis, and regulates osmolarity. This is Plasmepsin II from Plasmodium falciparum (isolate HB3).